Reading from the N-terminus, the 562-residue chain is NRAMP-like transporter smf-1 (562 aa).

The Cytoplasmic segment spans residues 1–55; sequence MASSNNDGPIEPEAEPWRITQNDHLEQDLLEEDAESQERVDIPVDDVEKAFSFKK. A helical membrane pass occupies residues 56-76; sequence LWAFTGPGFLMSIAYLDPGNI. The Extracellular segment spans residues 77–83; sequence ESDLQSG. Residues 84–104 traverse the membrane as a helical segment; sequence AQAAYKLLWVLLSAHIIGMLL. Residues 105-140 lie on the Cytoplasmic side of the membrane; sequence QRMSARLGVVSGKHMAEVAYQFYPRLPRIILWLMIE. The helical transmembrane segment at 141–161 threads the bilayer; that stretch reads IAIVCSDMQEVIGTAIAIFLL. Over 162-164 the chain is Extracellular; that stretch reads SKG. A helical transmembrane segment spans residues 165–185; sequence FVPLYVGVFITILDTFTFLLI. Over 186–194 the chain is Cytoplasmic; the sequence is DRYGIRKLE. The chain crosses the membrane as a helical span at residues 195–215; the sequence is LIFGFLILTMTVSFGYEFVVV. The Extracellular portion of the chain corresponds to 216–241; the sequence is KPPIGEVISGMVVPWCAGCGKGEFMQ. The helical transmembrane segment at 242-262 threads the bilayer; it reads AISVVGAVIMPHNLYLHSALV. At 263-287 the chain is on the cytoplasmic side; sequence KSRRVDRKDRRRVAEANKYFTLESA. A helical membrane pass occupies residues 288-308; sequence IALFLSFFINLFVVAVFAHGL. The Extracellular segment spans residues 309–347; it reads YQKTNADVREMCIARHDIPDADIFPNNTEPVEVDIYKGG. Asn334 is a glycosylation site (N-linked (GlcNAc...) asparagine). The helical transmembrane segment at 348–368 threads the bilayer; that stretch reads IYLGCQFGAIAMFIWGIGIFA. At 369 to 398 the chain is on the cytoplasmic side; sequence AGQSSTMTGTYTGQFVMEGFVKIEWPKWKR. Residues 399–419 form a helical membrane-spanning segment; sequence VLITRAIAITPTLVLTFYSQG. The Extracellular portion of the chain corresponds to 420 to 428; sequence VQNLTGMND. A glycan (N-linked (GlcNAc...) asparagine) is linked at Asn422. A helical transmembrane segment spans residues 429–449; the sequence is FLNCVQMIQLPFALIPIITFT. Residues 450–462 are Cytoplasmic-facing; sequence SSRKIMHDFRSSK. A helical transmembrane segment spans residues 463 to 483; it reads VFQIFALITSALILSINVYFI. Topologically, residues 484–496 are extracellular; sequence SDYVFSRLGSEWY. The chain crosses the membrane as a helical span at residues 497–517; the sequence is IIMVLAPITFAYVLFVLYLAL. Residues 518–562 lie on the Cytoplasmic side of the membrane; that stretch reads YCLVSCEIIPDTVSIRGFSFNKSYENDAPWLAVDSSAVHDNAGYQ.

It belongs to the NRAMP family. In terms of tissue distribution, expressed in dopaminergic neurons (at protein level). Expressed predominantly in anterior and posterior intestine, rectal gland cell, H-shaped excretory cell, vulva cells, proximal uterus and spermatheca in adults. Weakly expressed in hyp7 hypodermis, pharyngeal muscles and some anterior sensory, ring and posterior head neurons in adults. Expressed in the anchor cell at the larval stage.

The protein localises to the apical cell membrane. It localises to the cytoplasmic vesicle membrane. Probable divalent metal ion transporter which regulates Mn(2+) uptake. This is NRAMP-like transporter smf-1 (smf-1) from Caenorhabditis elegans.